A 167-amino-acid polypeptide reads, in one-letter code: Epithelial membrane protein 2 (167 aa).

Residues 1 to 21 (MLVLLAFIIAFHITSAALLFI) form a helical membrane-spanning segment. 3 N-linked (GlcNAc...) asparagine glycosylation sites follow: N44, N47, and N52. Helical transmembrane passes span 67–87 (TMILSTILCCIAFFIFVLQLF), 95–115 (FVLTSIIQLMSCLCVMIAASI), and 143–163 (YILAWVAFACTFISGMMYLIL).

Belongs to the PMP-22/EMP/MP20 family. In terms of assembly, interacts with PTK2; regulates PTK2 activation and localization. Interacts with ITGB3; regulates the levels of the heterodimer ITGA5-ITGB3 integrin surface expression. Interacts with P2RX7 (via C-terminus). Interacts with ITGB1; the interaction may be direct or indirect and ITGB1 has a heterodimer form. In terms of tissue distribution, expressed in ciliary body epithelia, sclera, cornea, and retinal pigment epithelium (at protein level). Expressed in lung and endometrial tissue; expression is particularly abundant in secretory endometrium (at protein level). Expressed in placental villous syncytiotrophoblasts and cytotrophoblasts and on the membrane of interstitial trophoblasts (at protein level).

The protein resides in the golgi apparatus membrane. The protein localises to the cell membrane. It localises to the apical cell membrane. It is found in the membrane raft. Its subcellular location is the cytoplasm. The protein resides in the nucleus. The protein localises to the perinuclear region. Functionally, functions as a key regulator of cell membrane composition by regulating protein surface expression. Also, plays a role in regulation of processes including cell migration, cell proliferation, cell contraction and cell adhesion. Regulates transepithelial migration of neutrophils into the alveolar lumen, potentially via mediation of cell surface expression of adhesion markers and lipid raft formation. Negatively regulates caveolae formation by reducing CAV1 expression and CAV1 amount by increasing lysosomal degradation. Facilitates surface trafficking and formation of lipid rafts bearing GPI-anchor proteins. Regulates surface expression of MHC1 and ICAM1 proteins increasing susceptibility to T-cell mediated cytotoxicity. Regulates the plasma membrane expression of the integrin heterodimers ITGA6-ITGB1, ITGA5-ITGB3 and ITGA5-ITGB1 resulting in modulation of cell-matrix adhesion. Also regulates many processes through PTK2. Regulates blood vessel endothelial cell migration and angiogenesis by regulating VEGF protein expression through PTK2 activation. Regulates cell migration and cell contraction through PTK2 and SRC activation. Regulates focal adhesion density, F-actin conformation and cell adhesion capacity through interaction with PTK2. Positively regulates cell proliferation. Plays a role during cell death and cell blebbing. Promotes angiogenesis and vasculogenesis through induction of VEGFA via a HIF1A-dependent pathway. Also plays a role in embryo implantation by regulating surface trafficking of integrin heterodimer ITGA5-ITGB3. Plays a role in placental angiogenesis and uterine natural killer cell regulation at the maternal-fetal placental interface, however not required in the maternal tissues for a viable pregnancy. Involved in the early stages of embryogenic development and cardiogenesis, potentially via regulation of epithelial-mesenchymal transition timing. May play a role in glomerular filtration. The sequence is that of Epithelial membrane protein 2 (EMP2) from Homo sapiens (Human).